The sequence spans 486 residues: NGFI-A-binding protein 1 (486 aa).

An NCD1 region spans residues 4-82 (ALPRTLGELQ…RDWVTNPGLF (79 aa)). Glycyl lysine isopeptide (Lys-Gly) (interchain with G-Cter in SUMO2) cross-links involve residues K126, K129, and K143. The tract at residues 160 to 187 (WQGHHATESEHSLSPADLGSPASPKESS) is disordered. A phosphoserine mark is found at S171 and S182. A Glycyl lysine isopeptide (Lys-Gly) (interchain with G-Cter in SUMO2) cross-link involves residue K211. The NCD2 stretch occupies residues 220–309 (LLKNNKKLAK…ARQVSREVTY (90 aa)). The interval 306 to 337 (EVTYKYTYRTTRLKCGERDELSPKRIKIEDGF) is necessary for nuclear localization. S327 carries the post-translational modification Phosphoserine. K332 is covalently cross-linked (Glycyl lysine isopeptide (Lys-Gly) (interchain with G-Cter in SUMO1); alternate). Residue K332 forms a Glycyl lysine isopeptide (Lys-Gly) (interchain with G-Cter in SUMO2); alternate linkage. Glycyl lysine isopeptide (Lys-Gly) (interchain with G-Cter in SUMO2) cross-links involve residues K354, K368, and K372. The tract at residues 398–438 (RQSSGEQSPDGGLPSDSSDGQGERPLNLRIPSVQNRQPHHF) is disordered. The span at 404–417 (QSPDGGLPSDSSDG) shows a compositional bias: low complexity. S405 carries the phosphoserine modification. Residues K453, K464, and K476 each participate in a glycyl lysine isopeptide (Lys-Gly) (interchain with G-Cter in SUMO2) cross-link. K479 participates in a covalent cross-link: Glycyl lysine isopeptide (Lys-Gly) (interchain with G-Cter in SUMO1); alternate. K479 participates in a covalent cross-link: Glycyl lysine isopeptide (Lys-Gly) (interchain with G-Cter in SUMO2); alternate.

This sequence belongs to the NAB family. Homomultimers may associate with EGR1 bound to DNA. Widely expressed in adult. In day 16 embryo highest levels in forebrain, thymus, salivary gland and cartilage.

The protein localises to the nucleus. Acts as a transcriptional repressor for zinc finger transcription factors EGR1 and EGR2. This Mus musculus (Mouse) protein is NGFI-A-binding protein 1 (Nab1).